We begin with the raw amino-acid sequence, 695 residues long: Elongation factor G (695 aa).

The region spanning 8–282 (EKTRNIGIMA…AVLDYLPAPT (275 aa)) is the tr-type G domain. GTP contacts are provided by residues 17-24 (AHIDAGKT), 81-85 (DTPGH), and 135-138 (NKMD).

This sequence belongs to the TRAFAC class translation factor GTPase superfamily. Classic translation factor GTPase family. EF-G/EF-2 subfamily.

The protein localises to the cytoplasm. In terms of biological role, catalyzes the GTP-dependent ribosomal translocation step during translation elongation. During this step, the ribosome changes from the pre-translocational (PRE) to the post-translocational (POST) state as the newly formed A-site-bound peptidyl-tRNA and P-site-bound deacylated tRNA move to the P and E sites, respectively. Catalyzes the coordinated movement of the two tRNA molecules, the mRNA and conformational changes in the ribosome. The protein is Elongation factor G of Listeria welshimeri serovar 6b (strain ATCC 35897 / DSM 20650 / CCUG 15529 / CIP 8149 / NCTC 11857 / SLCC 5334 / V8).